The primary structure comprises 400 residues: Endoglucanase A (400 aa).

An N-terminal signal peptide occupies residues 1–32 (MTKTFKKFSIAGLALLFMATAAFAGWSTKASA). The active-site Proton donor is the E187. The active-site Nucleophile is the E328.

It belongs to the glycosyl hydrolase 5 (cellulase A) family.

Its subcellular location is the secreted. It carries out the reaction Endohydrolysis of (1-&gt;4)-beta-D-glucosidic linkages in cellulose, lichenin and cereal beta-D-glucans.. Its activity is regulated as follows. Strongly inhibited by Hg(2+), Ag(+) and Fe(3+). To a lesser extent, is also inhibited by Pb(2+), Mn(2+), Sn(2+) and Cu(2+). By contrast, Ni(2+), Zn(2+), Co(2+), Ba(2+) and NH(4)(+) do not affect enzyme activity, while 10 mM Ca(2+), and Mg(2+) produce a stimulating effect. Is also strongly inhibited by chemicals such as N-bromosuccinimide and dimethyl(2-dihydroxy-5-nitrobenzyl)sulphonium bromide. Is not affected by N-acetylimidazole. Functionally, endoglucanase with high activity on carboxymethylcellulose (CMC) and lichenan, but not active on Avicel. The sequence is that of Endoglucanase A (celA) from Paenibacillus barcinonensis.